The chain runs to 161 residues: NAD(P)H-quinone oxidoreductase subunit I, chloroplastic (161 aa).

4Fe-4S ferredoxin-type domains lie at 55–84 (GRIH…VDWK) and 95–124 (LNYS…MTEE). [4Fe-4S] cluster is bound by residues C64, C67, C70, C74, C104, C107, C110, and C114.

The protein belongs to the complex I 23 kDa subunit family. NDH is composed of at least 16 different subunits, 5 of which are encoded in the nucleus. It depends on [4Fe-4S] cluster as a cofactor.

It is found in the plastid. The protein localises to the chloroplast thylakoid membrane. It catalyses the reaction a plastoquinone + NADH + (n+1) H(+)(in) = a plastoquinol + NAD(+) + n H(+)(out). It carries out the reaction a plastoquinone + NADPH + (n+1) H(+)(in) = a plastoquinol + NADP(+) + n H(+)(out). In terms of biological role, NDH shuttles electrons from NAD(P)H:plastoquinone, via FMN and iron-sulfur (Fe-S) centers, to quinones in the photosynthetic chain and possibly in a chloroplast respiratory chain. The immediate electron acceptor for the enzyme in this species is believed to be plastoquinone. Couples the redox reaction to proton translocation, and thus conserves the redox energy in a proton gradient. This is NAD(P)H-quinone oxidoreductase subunit I, chloroplastic from Phaseolus vulgaris (Kidney bean).